The chain runs to 196 residues: Carnitine operon protein CaiE (196 aa).

Residues 173–196 (TQPLRQMEENRPRLQGTTDVTPKR) are disordered. Polar residues predominate over residues 187–196 (QGTTDVTPKR).

This sequence belongs to the transferase hexapeptide repeat family.

It participates in amine and polyamine metabolism; carnitine metabolism. Its function is as follows. Overproduction of CaiE stimulates the activity of CaiB and CaiD. The protein is Carnitine operon protein CaiE of Escherichia coli O139:H28 (strain E24377A / ETEC).